Here is a 371-residue protein sequence, read N- to C-terminus: 4-hydroxybutyrate dehydrogenase (371 aa).

Residues 88-92, 126-130, and Lys148 contribute to the NAD(+) site; these read GSVID and TTCGT. 4 residues coordinate Fe cation: Asp182, His186, His253, and His267. His267 is a binding site for NAD(+).

The protein belongs to the iron-containing alcohol dehydrogenase family. In terms of assembly, homodimer. The cofactor is Fe(2+). Cu(2+) is required as a cofactor.

The catalysed reaction is 4-hydroxybutanoate + NAD(+) = succinate semialdehyde + NADH + H(+). With respect to regulation, inactivated by oxygen. Its function is as follows. Involved in the anaerobic succinate degradation pathway. Catalyzes the interconversion of gamma-hydroxybutyrate (GHB) and succinic semialdehyde (SSA). This is 4-hydroxybutyrate dehydrogenase from Clostridium kluyveri (strain ATCC 8527 / DSM 555 / NBRC 12016 / NCIMB 10680 / K1).